The chain runs to 211 residues: Endonuclease YncB (211 aa).

Positions 1–19 (MKKILISMIAIVLSITLAA) are cleaved as a signal peptide. C20 carries N-palmitoyl cysteine lipidation. The S-diacylglycerol cysteine moiety is linked to residue C20. The interval 24–63 (HAAKNHSDSNGTEQVSQDTHSNEYNQTEQKAGTPHSKNQK) is disordered. Residues 31–53 (DSNGTEQVSQDTHSNEYNQTEQK) show a composition bias toward polar residues. A TNase-like domain is found at 64–197 (KLVNVTLDRA…KSDKLSIWSK (134 aa)). Residue D77 participates in Ca(2+) binding. Residue R91 is part of the active site. Ca(2+) is bound by residues D96 and T97. Residues E99 and R142 contribute to the active site.

Belongs to the thermonuclease family. Ca(2+) serves as cofactor.

It is found in the cell membrane. Inhibited by aurintricalboxylic acid but not by Zn(2+). In terms of biological role, shows DNase activity on double strand DNA. The sequence is that of Endonuclease YncB (yncB) from Bacillus subtilis (strain 168).